An 832-amino-acid chain; its full sequence is pre-rRNA 2'-O-ribose RNA methyltransferase FTSJ3 (832 aa).

S-adenosyl-L-methionine is bound by residues G56, W58, D76, D92, and D117. Catalysis depends on K157, which acts as the Proton acceptor. 3 disordered regions span residues I332 to M358, R485 to K523, and D546 to E631. Composition is skewed to basic and acidic residues over residues E345–M358 and R485–V495. The segment covering E503–N514 has biased composition (acidic residues). The span at K570 to K579 shows a compositional bias: basic residues. Over residues A600–G618 the composition is skewed to acidic residues. Residues I726 to V758 adopt a coiled-coil conformation. Residues G795–K832 are disordered. Residues V811–A821 show a composition bias toward basic and acidic residues. Positions Q822–K832 are enriched in basic residues.

The protein belongs to the class I-like SAM-binding methyltransferase superfamily. RNA methyltransferase RlmE family. SPB1 subfamily. As to quaternary structure, interacts with NIP7.

It localises to the nucleus. The protein localises to the nucleolus. The enzyme catalyses a ribonucleotide in rRNA + S-adenosyl-L-methionine = a 2'-O-methylribonucleotide in rRNA + S-adenosyl-L-homocysteine + H(+). In terms of biological role, RNA 2'-O-methyltransferase involved in the processing of the 34S pre-rRNA to 18S rRNA and in 40S ribosomal subunit formation. The polypeptide is pre-rRNA 2'-O-ribose RNA methyltransferase FTSJ3 (Gallus gallus (Chicken)).